We begin with the raw amino-acid sequence, 752 residues long: Peptidyl-prolyl cis-trans isomerase G (752 aa).

One can recognise a PPIase cyclophilin-type domain in the interval 11-176 (FFDIAINNQP…AEVRILSCGE (166 aa)). The span at 182–193 (KVKKEEKKRHKS) shows a compositional bias: basic residues. The interval 182 to 752 (KVKKEEKKRH…SPGTDEDKSG (571 aa)) is disordered. The segment covering 194 to 214 (SSSSSSSDSDSSSDSQSSSDS) has biased composition (low complexity). The segment covering 226–251 (RKRKKKHRKNSRKHKKEKKKRKKSKK) has biased composition (basic residues). Residues S252, S254, S255, S257, and S288 each carry the phosphoserine modification. Residues 290–308 (PKADDKERKNREREREREC) are compositionally biased toward basic and acidic residues. A Phosphoserine modification is found at S313. Over residues 327-345 (FGRKIKGRGPRRYRTPSRS) the composition is skewed to basic residues. 2 stretches are compositionally biased toward basic and acidic residues: residues 346 to 366 (RSRD…EMQR) and 377 to 447 (RWIK…DKYN). The residue at position 354 (S354) is a Phosphoserine. At T356 the chain carries Phosphothreonine. Phosphoserine is present on S384. A Glycyl lysine isopeptide (Lys-Gly) (interchain with G-Cter in SUMO2) cross-link involves residue K390. Residues S395, S411, and S413 each carry the phosphoserine modification. Residues 448-461 (KNKVKKRGKSKSRS) are compositionally biased toward basic residues. Basic and acidic residues-rich tracts occupy residues 462–552 (KSKE…DLTK) and 577–598 (RSHD…QEYR). Over residues 599 to 625 (RRGRSRSRDRRTPGRSRSKDRRRRRRD) the composition is skewed to basic residues. Positions 626–682 (SRSSEREESQSRNKEKYRSQDSKSSHRKENSEGEKRMYSKSRDHSSSNNNREKKADI) are enriched in basic and acidic residues. Phosphoserine is present on residues S685 and S688. Residues 685 to 705 (SPVSKTKQSSQDNEVKSSTLK) show a composition bias toward polar residues. Residue K691 forms a Glycyl lysine isopeptide (Lys-Gly) (interchain with G-Cter in SUMO2) linkage. Phosphoserine occurs at positions 694, 742, and 743. The segment covering 706 to 752 (NQEDEKTRSPVEKENQKSKGQENDHVHDKNKKCDHESSPGTDEDKSG) has biased composition (basic and acidic residues). T746 carries the phosphothreonine modification. A Phosphoserine modification is found at S751.

Interacts with CLK1, PNN and with the phosphorylated C-terminal domain of RNA polymerase II.

The protein resides in the nucleus matrix. It localises to the nucleus speckle. The enzyme catalyses [protein]-peptidylproline (omega=180) = [protein]-peptidylproline (omega=0). With respect to regulation, inhibited by cyclosporin A (CsA). In terms of biological role, PPIase that catalyzes the cis-trans isomerization of proline imidic peptide bonds in oligopeptides and may therefore assist protein folding. May be implicated in the folding, transport, and assembly of proteins. May play an important role in the regulation of pre-mRNA splicing. This chain is Peptidyl-prolyl cis-trans isomerase G (Ppig), found in Rattus norvegicus (Rat).